An 866-amino-acid chain; its full sequence is Thiamine diphosphate dependent-3-acetyloctanal synthase PigD (866 aa).

A disordered region spans residues 826–866 (KGWQRDPSDREALQERKDWAARQPESTSTSFDQGQNKEAIS). Over residues 828–845 (WQRDPSDREALQERKDWA) the composition is skewed to basic and acidic residues. The segment covering 849-866 (PESTSTSFDQGQNKEAIS) has biased composition (polar residues).

Belongs to the TPP enzyme family. Thiamine diphosphate is required as a cofactor.

It catalyses the reaction (2E)-octenal + pyruvate + H(+) = (S)-3-acetyloctanal + CO2. Its pathway is antibiotic biosynthesis; prodigiosin biosynthesis. Its function is as follows. Involved in the biosynthesis of 2-methyl-3-n-amyl-pyrrole (MAP), one of the terminal products involved in the biosynthesis of the red antibiotic prodigiosin (Pig). Catalyzes the decarboxylation of pyruvate, followed by the modification of the resulting two-carbon fragment acetaldehyde at the C3 position of the 2-octenal (1,2-addition of acetaldehyde) giving 3-acetyloctanal. In Serratia sp. (strain ATCC 39006) (Prodigiosinella confusarubida), this protein is Thiamine diphosphate dependent-3-acetyloctanal synthase PigD.